Here is a 104-residue protein sequence, read N- to C-terminus: MDSRMKVLKLFKTLHRTRQCVFQNDCRALEAARRRINEEFKKNKSECSPAKISELLKFGTDVEIVLRTSVVQGIHTDSNKLVLQARKDLLLDNIPFCDAPEKQT.

The protein belongs to the complex I LYR family. Interacts with UQCRFS1.

Its subcellular location is the mitochondrion matrix. Functionally, assembly factor required for Rieske Fe-S protein UQCRFS1 incorporation into the cytochrome b-c1 (CIII) complex. Functions as a chaperone, binding to this subunit within the mitochondrial matrix and stabilizing it prior to its translocation and insertion into the late CIII dimeric intermediate within the mitochondrial inner membrane. The chain is Complex III assembly factor LYRM7 (lyrm7) from Xenopus tropicalis (Western clawed frog).